The primary structure comprises 141 residues: Hemoglobin subunit alpha (141 aa).

The 141-residue stretch at valine 1–arginine 141 folds into the Globin domain. Serine 3 is modified (phosphoserine). Lysine 7 and lysine 11 each carry N6-succinyllysine. At lysine 16 the chain carries N6-acetyllysine; alternate. At lysine 16 the chain carries N6-succinyllysine; alternate. Tyrosine 24 carries the post-translational modification Phosphotyrosine. Serine 35 carries the post-translational modification Phosphoserine. Lysine 40 is subject to N6-succinyllysine. The residue at position 49 (serine 49) is a Phosphoserine. Histidine 58 serves as a coordination point for O2. A heme b-binding site is contributed by histidine 87. Serine 102 carries the phosphoserine modification. At threonine 108 the chain carries Phosphothreonine. Serine 124 and serine 131 each carry phosphoserine. 2 positions are modified to phosphothreonine: threonine 134 and threonine 137. Serine 138 is modified (phosphoserine).

The protein belongs to the globin family. Heterotetramer of two alpha chains and two beta chains. In terms of tissue distribution, red blood cells.

In terms of biological role, involved in oxygen transport from the lung to the various peripheral tissues. This Peromyscus californicus (California mouse) protein is Hemoglobin subunit alpha.